Consider the following 72-residue polypeptide: Translation initiation factor IF-1 (72 aa).

The region spanning 1-72 (MAKSDVIEVE…SKGRITYRFK (72 aa)) is the S1-like domain.

This sequence belongs to the IF-1 family. As to quaternary structure, component of the 30S ribosomal translation pre-initiation complex which assembles on the 30S ribosome in the order IF-2 and IF-3, IF-1 and N-formylmethionyl-tRNA(fMet); mRNA recruitment can occur at any time during PIC assembly.

It localises to the cytoplasm. Functionally, one of the essential components for the initiation of protein synthesis. Stabilizes the binding of IF-2 and IF-3 on the 30S subunit to which N-formylmethionyl-tRNA(fMet) subsequently binds. Helps modulate mRNA selection, yielding the 30S pre-initiation complex (PIC). Upon addition of the 50S ribosomal subunit IF-1, IF-2 and IF-3 are released leaving the mature 70S translation initiation complex. This Levilactobacillus brevis (strain ATCC 367 / BCRC 12310 / CIP 105137 / JCM 1170 / LMG 11437 / NCIMB 947 / NCTC 947) (Lactobacillus brevis) protein is Translation initiation factor IF-1.